Consider the following 427-residue polypeptide: Indole diterpene prenyltransferase penD (427 aa).

Residue Y77–V78 participates in L-tryptophan binding. Substrate contacts are provided by R99, K186, Y188, R259, K261, Y263, Y344, Y409, and Y413.

Belongs to the tryptophan dimethylallyltransferase family.

It participates in secondary metabolite biosynthesis. Its function is as follows. Indole diterpene prenyltransferase; part of the gene cluster that mediates the biosynthesis of the indole diterpenes penitrems. The geranylgeranyl diphosphate (GGPP) synthase penG catalyzes the first step in penitrem biosynthesis via conversion of farnesyl pyrophosphate and isopentyl pyrophosphate into geranylgeranyl pyrophosphate (GGPP). Condensation of indole-3-glycerol phosphate with GGPP by the prenyl transferase penC then forms 3-geranylgeranylindole (3-GGI). Epoxidation by the FAD-dependent monooxygenase penM leads to a epoxidized-GGI that is substrate of the terpene cyclase penB for cyclization to yield paspaline. Paspaline is subsequently converted to 13-desoxypaxilline by the cytochrome P450 monooxygenase penP, the latter being then converted to paxilline by the cytochrome P450 monooxygenase penQ. Paxilline is converted to beta-paxitriol via C-10 ketoreduction by the short-chain dehydrogenase PC-15 which can be monoprenylated at the C-20 by the indole diterpene prenyltransferase penD. A two-step elimination (acetylation and elimination) process performed by the O-acetyltransferase PC-16 and the P.simplicissimum ptmI-ortholog not yet identified in P.crustosum, leads to the production of the prenylated form of penijanthine. The FAD-linked oxidoreductase ptmO then converts the prenylated form of penijanthine into PC-M5 which is in turn transformed into PC-M4 by the aromatic dimethylallyltransferase PC-22. A series of oxidation steps involving 4 cytochrome P450 monooxygenases (PC-21, PC-05, PC-23, PC-20) and a FAD-dependent monooxygenase (PC-14) are required for the transformation of PC-M4 to penitrems A and E. Synthesis of these final products is proposed to proceed via penitrems D and C (PC-21, PC-05, PC-14) and penitrems B and F (PC-21, PC-05, PC-14, PC-23). The sequence is that of Indole diterpene prenyltransferase penD from Penicillium crustosum (Blue mold fungus).